An 87-amino-acid chain; its full sequence is Small ribosomal subunit protein bS20 (87 aa).

The tract at residues 1–27 is disordered; that stretch reads MANIKSAKKRALQSEKRRQHNASRRSM.

Belongs to the bacterial ribosomal protein bS20 family.

Its function is as follows. Binds directly to 16S ribosomal RNA. The polypeptide is Small ribosomal subunit protein bS20 (Aeromonas hydrophila subsp. hydrophila (strain ATCC 7966 / DSM 30187 / BCRC 13018 / CCUG 14551 / JCM 1027 / KCTC 2358 / NCIMB 9240 / NCTC 8049)).